Consider the following 712-residue polypeptide: Polyribonucleotide nucleotidyltransferase (712 aa).

Positions 487 and 493 each coordinate Mg(2+). The KH domain maps to 554–613 (PKIITMTINPDKIRDVIGPSGKQINKIIEETGVKIDIEQDGTVFISSINQEMNDKAKKII). The 69-residue stretch at 623 to 691 (GEIYEGKVKR…KQGRVNLSRK (69 aa)) folds into the S1 motif domain.

It belongs to the polyribonucleotide nucleotidyltransferase family. Mg(2+) is required as a cofactor.

The protein resides in the cytoplasm. It carries out the reaction RNA(n+1) + phosphate = RNA(n) + a ribonucleoside 5'-diphosphate. In terms of biological role, involved in mRNA degradation. Catalyzes the phosphorolysis of single-stranded polyribonucleotides processively in the 3'- to 5'-direction. The sequence is that of Polyribonucleotide nucleotidyltransferase from Bacillus cereus (strain AH187).